Reading from the N-terminus, the 415-residue chain is Tyrosine--tRNA ligase (415 aa).

Position 40 (Tyr-40) interacts with L-tyrosine. The 'HIGH' region signature appears at Ala-45–Ser-54. Residues Tyr-178 and Gln-182 each coordinate L-tyrosine. A 'KMSKS' region motif is present at residues Lys-238–Ser-242. Lys-241 provides a ligand contact to ATP. Residues Ala-350–Leu-414 enclose the S4 RNA-binding domain.

It belongs to the class-I aminoacyl-tRNA synthetase family. TyrS type 1 subfamily. In terms of assembly, homodimer.

It is found in the cytoplasm. It catalyses the reaction tRNA(Tyr) + L-tyrosine + ATP = L-tyrosyl-tRNA(Tyr) + AMP + diphosphate + H(+). Its function is as follows. Catalyzes the attachment of tyrosine to tRNA(Tyr) in a two-step reaction: tyrosine is first activated by ATP to form Tyr-AMP and then transferred to the acceptor end of tRNA(Tyr). The protein is Tyrosine--tRNA ligase of Ruegeria pomeroyi (strain ATCC 700808 / DSM 15171 / DSS-3) (Silicibacter pomeroyi).